Consider the following 269-residue polypeptide: Tryptophan synthase alpha chain (269 aa).

Catalysis depends on proton acceptor residues E49 and D60.

This sequence belongs to the TrpA family. Tetramer of two alpha and two beta chains.

It carries out the reaction (1S,2R)-1-C-(indol-3-yl)glycerol 3-phosphate + L-serine = D-glyceraldehyde 3-phosphate + L-tryptophan + H2O. Its pathway is amino-acid biosynthesis; L-tryptophan biosynthesis; L-tryptophan from chorismate: step 5/5. Its function is as follows. The alpha subunit is responsible for the aldol cleavage of indoleglycerol phosphate to indole and glyceraldehyde 3-phosphate. The polypeptide is Tryptophan synthase alpha chain (Actinobacillus pleuropneumoniae serotype 7 (strain AP76)).